We begin with the raw amino-acid sequence, 158 residues long: 2-C-methyl-D-erythritol 2,4-cyclodiphosphate synthase (158 aa).

Residues aspartate 9 and histidine 11 each contribute to the a divalent metal cation site. Residues 9 to 11 (DVH) and 35 to 36 (HS) contribute to the 4-CDP-2-C-methyl-D-erythritol 2-phosphate site. Histidine 43 contacts a divalent metal cation. 4-CDP-2-C-methyl-D-erythritol 2-phosphate-binding positions include 57-59 (DIG), 62-66 (FPDTD), 101-107 (AQRPKMA), 133-136 (TTTE), phenylalanine 140, and arginine 143.

It belongs to the IspF family. As to quaternary structure, homotrimer. It depends on a divalent metal cation as a cofactor.

It catalyses the reaction 4-CDP-2-C-methyl-D-erythritol 2-phosphate = 2-C-methyl-D-erythritol 2,4-cyclic diphosphate + CMP. Its pathway is isoprenoid biosynthesis; isopentenyl diphosphate biosynthesis via DXP pathway; isopentenyl diphosphate from 1-deoxy-D-xylulose 5-phosphate: step 4/6. Involved in the biosynthesis of isopentenyl diphosphate (IPP) and dimethylallyl diphosphate (DMAPP), two major building blocks of isoprenoid compounds. Catalyzes the conversion of 4-diphosphocytidyl-2-C-methyl-D-erythritol 2-phosphate (CDP-ME2P) to 2-C-methyl-D-erythritol 2,4-cyclodiphosphate (ME-CPP) with a corresponding release of cytidine 5-monophosphate (CMP). This Lysinibacillus sphaericus (strain C3-41) protein is 2-C-methyl-D-erythritol 2,4-cyclodiphosphate synthase.